Consider the following 348-residue polypeptide: Putative 4-hydroxythreonine-4-phosphate dehydrogenase 2 (348 aa).

A divalent metal cation-binding residues include His-180, His-224, and His-279.

This sequence belongs to the PdxA family. Homodimer. Zn(2+) serves as cofactor. Requires Mg(2+) as cofactor. It depends on Co(2+) as a cofactor.

The protein localises to the cytoplasm. It catalyses the reaction 4-(phosphooxy)-L-threonine + NAD(+) = 3-amino-2-oxopropyl phosphate + CO2 + NADH. It participates in cofactor biosynthesis; pyridoxine 5'-phosphate biosynthesis; pyridoxine 5'-phosphate from D-erythrose 4-phosphate: step 4/5. In terms of biological role, catalyzes the NAD(P)-dependent oxidation of 4-(phosphooxy)-L-threonine (HTP) into 2-amino-3-oxo-4-(phosphooxy)butyric acid which spontaneously decarboxylates to form 3-amino-2-oxopropyl phosphate (AHAP). In Rhizobium meliloti (strain 1021) (Ensifer meliloti), this protein is Putative 4-hydroxythreonine-4-phosphate dehydrogenase 2.